The following is a 117-amino-acid chain: Transcription elongation factor A protein-like 8 (117 aa).

2 stretches are compositionally biased toward basic and acidic residues: residues 1–10 and 61–75; these read MQKSCEENEG and FKEDTPVRHLDPEEM. Positions 1–75 are disordered; that stretch reads MQKSCEENEG…PVRHLDPEEM (75 aa). Residues 73–100 are a coiled coil; it reads EEMIRGVDELERLREEIRRVRNKFVMMH.

Belongs to the TFS-II family. TFA subfamily.

Its subcellular location is the nucleus. Functionally, may be involved in transcriptional regulation. This Homo sapiens (Human) protein is Transcription elongation factor A protein-like 8 (TCEAL8).